Consider the following 763-residue polypeptide: Phosphoglycerol transferase I (763 aa).

4 helical membrane-spanning segments follow: residues 1–21, 26–46, 77–97, and 108–128; these read MSEL…AWKA, WWFA…ITLY, ILPG…LGWV, and VGYS…SPAF.

This sequence belongs to the OpgB family.

The protein resides in the cell inner membrane. It carries out the reaction a phosphatidylglycerol + a membrane-derived-oligosaccharide D-glucose = a 1,2-diacyl-sn-glycerol + a membrane-derived-oligosaccharide 6-(glycerophospho)-D-glucose.. The protein operates within glycan metabolism; osmoregulated periplasmic glucan (OPG) biosynthesis. In terms of biological role, transfers a phosphoglycerol residue from phosphatidylglycerol to the membrane-bound nascent glucan backbones. This Salmonella dublin (strain CT_02021853) protein is Phosphoglycerol transferase I.